Here is a 543-residue protein sequence, read N- to C-terminus: Protein lin-9 homolog (543 aa).

Residues 21 to 82 (REGSLSNTLN…SRSPRRSQRV (62 aa)) form a disordered region. Positions 24–55 (SLSNTLNEKNNLPKSQTTRGRSSYVSMETPTR) are enriched in polar residues. Residues 355–451 (IKKEHIKHLK…VLRQNNTLAS (97 aa)) adopt a coiled-coil conformation.

This sequence belongs to the lin-9 family. In terms of assembly, component of the DREAM complex.

The protein resides in the nucleus. The chain is Protein lin-9 homolog (lin9) from Danio rerio (Zebrafish).